The primary structure comprises 471 residues: Chromosomal replication initiator protein DnaA (471 aa).

The interval 1 to 91 is domain I, interacts with DnaA modulators; the sequence is MVDVSETTER…KYWQDESDAV (91 aa). A domain II region spans residues 91 to 133; sequence VYSVDICVSDGVGVQPQMAEHPDGAVDGPPVVMVGGTYDHLSS. The tract at residues 134-352 is domain III, AAA+ region; sequence PLDPRFTFDN…GALNKVVAHS (219 aa). Residues glycine 180, glycine 182, lysine 183, and threonine 184 each contribute to the ATP site. The segment at 353–471 is domain IV, binds dsDNA; the sequence is SLVGRSVTIE…DINLLIRMLR (119 aa).

The protein belongs to the DnaA family. In terms of assembly, oligomerizes as a right-handed, spiral filament on DNA at oriC.

Its subcellular location is the cytoplasm. Its function is as follows. Plays an essential role in the initiation and regulation of chromosomal replication. ATP-DnaA binds to the origin of replication (oriC) to initiate formation of the DNA replication initiation complex once per cell cycle. Binds the DnaA box (a 9 base pair repeat at the origin) and separates the double-stranded (ds)DNA. Forms a right-handed helical filament on oriC DNA; dsDNA binds to the exterior of the filament while single-stranded (ss)DNA is stabiized in the filament's interior. The ATP-DnaA-oriC complex binds and stabilizes one strand of the AT-rich DNA unwinding element (DUE), permitting loading of DNA polymerase. After initiation quickly degrades to an ADP-DnaA complex that is not apt for DNA replication. Binds acidic phospholipids. The chain is Chromosomal replication initiator protein DnaA from Anaplasma marginale (strain St. Maries).